The following is a 213-amino-acid chain: Protein-L-isoaspartate O-methyltransferase (213 aa).

The active site involves serine 60.

This sequence belongs to the methyltransferase superfamily. L-isoaspartyl/D-aspartyl protein methyltransferase family.

The protein resides in the cytoplasm. It carries out the reaction [protein]-L-isoaspartate + S-adenosyl-L-methionine = [protein]-L-isoaspartate alpha-methyl ester + S-adenosyl-L-homocysteine. Its function is as follows. Catalyzes the methyl esterification of L-isoaspartyl residues in peptides and proteins that result from spontaneous decomposition of normal L-aspartyl and L-asparaginyl residues. It plays a role in the repair and/or degradation of damaged proteins. In Roseobacter denitrificans (strain ATCC 33942 / OCh 114) (Erythrobacter sp. (strain OCh 114)), this protein is Protein-L-isoaspartate O-methyltransferase.